The chain runs to 346 residues: Selenide, water dikinase (346 aa).

Selenocysteine 16 is an active-site residue. Residue selenocysteine 16 is a non-standard amino acid, selenocysteine. ATP-binding positions include lysine 19 and 47-49; that span reads TAD. Mg(2+) is bound at residue aspartate 50. ATP contacts are provided by residues aspartate 67, aspartate 90, and 138–140; that span reads GHS. Residue aspartate 90 participates in Mg(2+) binding. Aspartate 226 lines the Mg(2+) pocket.

This sequence belongs to the selenophosphate synthase 1 family. Class I subfamily. As to quaternary structure, homodimer. The cofactor is Mg(2+).

The catalysed reaction is hydrogenselenide + ATP + H2O = selenophosphate + AMP + phosphate + 2 H(+). Functionally, synthesizes selenophosphate from selenide and ATP. This is Selenide, water dikinase from Haemophilus ducreyi (strain 35000HP / ATCC 700724).